We begin with the raw amino-acid sequence, 139 residues long: Large ribosomal subunit protein uL16 (139 aa).

It belongs to the universal ribosomal protein uL16 family. As to quaternary structure, part of the 50S ribosomal subunit.

In terms of biological role, binds 23S rRNA and is also seen to make contacts with the A and possibly P site tRNAs. The polypeptide is Large ribosomal subunit protein uL16 (Picosynechococcus sp. (strain ATCC 27264 / PCC 7002 / PR-6) (Agmenellum quadruplicatum)).